We begin with the raw amino-acid sequence, 495 residues long: Cobyric acid synthase (495 aa).

One can recognise a GATase cobBQ-type domain in the interval 256–444; that stretch reads KVNVAVVLLR…VHGILDNPSV (189 aa). C337 acts as the Nucleophile in catalysis. H436 is a catalytic residue.

This sequence belongs to the CobB/CobQ family. CobQ subfamily.

It participates in cofactor biosynthesis; adenosylcobalamin biosynthesis. Functionally, catalyzes amidations at positions B, D, E, and G on adenosylcobyrinic A,C-diamide. NH(2) groups are provided by glutamine, and one molecule of ATP is hydrogenolyzed for each amidation. The protein is Cobyric acid synthase of Bacteroides fragilis (strain ATCC 25285 / DSM 2151 / CCUG 4856 / JCM 11019 / LMG 10263 / NCTC 9343 / Onslow / VPI 2553 / EN-2).